A 531-amino-acid chain; its full sequence is CTP synthase (531 aa).

Residues 1 to 264 (MPKFVVVTGG…GDFLVERLRL (264 aa)) form an amidoligase domain region. A CTP-binding site is contributed by Ser13. Residue Ser13 participates in UTP binding. 14 to 19 (GLGKGV) provides a ligand contact to ATP. Tyr54 lines the L-glutamine pocket. Asp71 contacts ATP. Asp71 and Glu139 together coordinate Mg(2+). Residues 146–148 (DYE), 185–190 (KTKPLQ), and Lys221 each bind CTP. Residues 185-190 (KTKPLQ) and Lys221 contribute to the UTP site. Positions 293–531 (CGKYVELPDA…LSAAVEQSRR (239 aa)) constitute a Glutamine amidotransferase type-1 domain. Gly351 is an L-glutamine binding site. Cys378 serves as the catalytic Nucleophile; for glutamine hydrolysis. Residues 379 to 382 (FGMQ), Glu402, and Arg459 contribute to the L-glutamine site. Catalysis depends on residues His504 and Glu506.

It belongs to the CTP synthase family. In terms of assembly, homotetramer.

It catalyses the reaction UTP + L-glutamine + ATP + H2O = CTP + L-glutamate + ADP + phosphate + 2 H(+). The catalysed reaction is L-glutamine + H2O = L-glutamate + NH4(+). The enzyme catalyses UTP + NH4(+) + ATP = CTP + ADP + phosphate + 2 H(+). Its pathway is pyrimidine metabolism; CTP biosynthesis via de novo pathway; CTP from UDP: step 2/2. Allosterically activated by GTP, when glutamine is the substrate; GTP has no effect on the reaction when ammonia is the substrate. The allosteric effector GTP functions by stabilizing the protein conformation that binds the tetrahedral intermediate(s) formed during glutamine hydrolysis. Inhibited by the product CTP, via allosteric rather than competitive inhibition. Catalyzes the ATP-dependent amination of UTP to CTP with either L-glutamine or ammonia as the source of nitrogen. Regulates intracellular CTP levels through interactions with the four ribonucleotide triphosphates. The protein is CTP synthase of Pyrobaculum calidifontis (strain DSM 21063 / JCM 11548 / VA1).